The chain runs to 1141 residues: DNA-directed RNA polymerase subunit beta (1141 aa).

The segment at 1117 to 1141 is disordered; that stretch reads GINISREEPPGQLDDTPDTFSRGGM.

This sequence belongs to the RNA polymerase beta chain family. The RNAP catalytic core consists of 2 alpha, 1 beta, 1 beta' and 1 omega subunit. When a sigma factor is associated with the core the holoenzyme is formed, which can initiate transcription.

It carries out the reaction RNA(n) + a ribonucleoside 5'-triphosphate = RNA(n+1) + diphosphate. DNA-dependent RNA polymerase catalyzes the transcription of DNA into RNA using the four ribonucleoside triphosphates as substrates. The protein is DNA-directed RNA polymerase subunit beta of Rubrobacter xylanophilus (strain DSM 9941 / JCM 11954 / NBRC 16129 / PRD-1).